The following is a 424-amino-acid chain: Protein CapL (424 aa).

Belongs to the UDP-glucose/GDP-mannose dehydrogenase family.

Its pathway is capsule biogenesis; capsule polysaccharide biosynthesis. Its function is as follows. Required for the biosynthesis of type 1 capsular polysaccharide. The chain is Protein CapL (capL) from Staphylococcus aureus.